Here is a 187-residue protein sequence, read N- to C-terminus: Large ribosomal subunit protein uL22 (187 aa).

Basic and acidic residues-rich tracts occupy residues 158–168 and 178–187; these read TKATDESEQAK and RQKEKMMRNE. Residues 158 to 187 form a disordered region; it reads TKATDESEQAKKKLSKKKLQRQKEKMMRNE.

The protein belongs to the universal ribosomal protein uL22 family.

The chain is Large ribosomal subunit protein uL22 (RpL17) from Anopheles gambiae (African malaria mosquito).